Consider the following 525-residue polypeptide: Mannuronan C5-epimerase AlgG (525 aa).

A signal peptide spans 1-29; that stretch reads MNVQRKLASTQLKPVLLGVLLATSAWSQA. 5 PbH1 repeats span residues 287-309, 311-334, 336-358, 360-382, and 383-405; these read ADDV…DPHD, SERL…IVSR, VNNS…VLDR, SEHN…TLYE, and SSNN…RMRN. Catalysis depends on His-308, which acts as the Proton acceptor.

The protein belongs to the D-mannuronate C5-epimerase family.

It is found in the periplasm. The enzyme catalyses [(1-&gt;4)-beta-D-mannuronosyl](n) = [alginate](n). It functions in the pathway glycan biosynthesis; alginate biosynthesis. Inhibited by zinc. In terms of biological role, catalyzes the epimerization of beta-D-mannuronate to alpha-L-guluronate during the synthesis of the linear polysaccharide alginate. In addition, is part of a periplasmic protein complex that protects alginate from degradation by AlgL by channeling the newly formed alginate polymer through a scaffold that transfers the alginate polymer through the periplasmic space to the outer membrane secretin AlgE. This is Mannuronan C5-epimerase AlgG from Azotobacter vinelandii.